Reading from the N-terminus, the 532-residue chain is Optineurin (532 aa).

Coiled coils occupy residues 27–143 (SMKN…LKLG) and 195–466 (EEVA…EEMM). The segment at 502–532 (QPSITVYTCPKCNLTVPDMDTLQIHVMDCIT) adopts a CCHC NOA-type zinc-finger fold. Residues cysteine 510, cysteine 513, histidine 526, and cysteine 530 each contribute to the Zn(2+) site.

The protein resides in the cytoplasm. It localises to the perinuclear region. Its subcellular location is the golgi apparatus. It is found in the trans-Golgi network. The protein localises to the cytoplasmic vesicle. The protein resides in the recycling endosome. It localises to the autophagosome. Functionally, probably part of the TNF-alpha signaling pathway that can shift the equilibrium toward induction of cell death. May act by regulating membrane trafficking and cellular morphogenesis. In Xenopus laevis (African clawed frog), this protein is Optineurin (optn).